The sequence spans 705 residues: MSKQRIYEYAKELNLKSKEIIDELKSMNIEVSNHMQALEDDQIKALDKKFKKEQKNDNKQSTQNNHQKSNNQNQNKGQQKDNKKNQQQNNKGNKGNKKNNRNNKKNNKNNKPQNQPAAPKEIPSKVTYQEGITVGEFADKLNVESSEIIKKLFLLGIVANINQSLNQETIELIADDYGVEVEEEVVINEEDLSIYFEDEKDDPEAIERPAVVTIMGHVDHGKTTLLDSIRHTKVTAGEAGGITQHIGAYQIENDGKKITFLDTPGHAAFTTMRARGAQVTDITILVVAADDGVMPQTIEAINHAKEAEVPIIVAVNKIDKPTSNPDRVMQELTEYGLIPEDWGGETIFVPLSALSGDGIDDLLEMIGLVAEVQELKANPKNRAVGTVIEAELDKSRGPSASLLVQNGTLNVGDAIVVGNTYGRIRAMVNDLGQRIKTAGPSTPVEITGINDVPQAGDRFVVFSDEKQARRIGESRHEASIVQQRQESKNVSLDNLFEQMKQGEMKDLNVIIKGDVQGSVEALAASLMKIDVEGVNVRIIHTAVGAINESDVTLANASNGIIIGFNVRPDSGAKRAAEAENVDMRLHRVIYNVIEEIESAMKGLLDPEFEEQVIGQAEVRQTFKVSKVGTIAGCYVTEGKITRNAGVRIIRDGIVQYEGELDTLKRFKDDAKEVAKGYECGITIENYNDLKEGDVIEAFEMVEIKR.

The tract at residues 40–124 (DDQIKALDKK…QPAAPKEIPS (85 aa)) is disordered. Residues 41 to 58 (DQIKALDKKFKKEQKNDN) show a composition bias toward basic and acidic residues. A compositionally biased stretch (low complexity) spans 59-77 (KQSTQNNHQKSNNQNQNKG). The segment covering 94–108 (KGNKKNNRNNKKNNK) has biased composition (basic residues). The region spanning 207–376 (ERPAVVTIMG…GLVAEVQELK (170 aa)) is the tr-type G domain. Residues 216 to 223 (GHVDHGKT) form a G1 region. 216–223 (GHVDHGKT) contributes to the GTP binding site. The segment at 241 to 245 (GITQH) is G2. Residues 262–265 (DTPG) are G3. GTP is bound by residues 262–266 (DTPGH) and 316–319 (NKID). The segment at 316–319 (NKID) is G4. The segment at 352–354 (SAL) is G5.

Belongs to the TRAFAC class translation factor GTPase superfamily. Classic translation factor GTPase family. IF-2 subfamily.

The protein resides in the cytoplasm. In terms of biological role, one of the essential components for the initiation of protein synthesis. Protects formylmethionyl-tRNA from spontaneous hydrolysis and promotes its binding to the 30S ribosomal subunits. Also involved in the hydrolysis of GTP during the formation of the 70S ribosomal complex. The polypeptide is Translation initiation factor IF-2 (Staphylococcus aureus (strain Mu3 / ATCC 700698)).